The chain runs to 778 residues: Ribosome biogenesis protein BOP1 homolog (778 aa).

The span at 1–10 shows a compositional bias: basic residues; sequence MAKKQDRKRK. The tract at residues 1–152 is disordered; sequence MAKKQDRKRK…DSDTSDEEDI (152 aa). Composition is skewed to acidic residues over residues 44 to 53, 60 to 72, and 84 to 105; these read EDSTDDEGID, SSED…DEEG, and SSDE…DEEE. Residues 114 to 124 are compositionally biased toward polar residues; it reads TTSSKAETNNE. Acidic residues predominate over residues 142–151; that stretch reads EDSDTSDEED. 7 WD repeats span residues 438–479, 481–519, 564–606, 609–647, 650–689, 693–732, and 748–778; these read GHTD…RTIE, EDVV…KLLI, NHFK…SQIP, KSKG…LIKK, TNSK…KPYQ, LHRN…DLLQ, and RDDF…RLYT.

Belongs to the WD repeat BOP1/ERB1 family.

The protein localises to the nucleus. It is found in the nucleolus. It localises to the nucleoplasm. Its function is as follows. Required for maturation of ribosomal RNAs and formation of the large ribosomal subunit. This is Ribosome biogenesis protein BOP1 homolog from Drosophila willistoni (Fruit fly).